Reading from the N-terminus, the 372-residue chain is MRKLLASPFSSLLAVVFISVISVVRCCSPKDQTALNAFKSSLSEPNLGIFNTWSENTDCCKEWYGISCDPDSGRVTDISLRGESEDAIFQKAGRSGYMSGSIDPAVCDLTALTSLVLADWKGITGEIPPCITSLASLRILDLAGNKITGEIPAEIGKLSKLAVLNLAENQMSGEIPASLTSLIELKHLELTENGITGVIPADFGSLKMLSRVLLGRNELTGSIPESISGMERLADLDLSKNHIEGPIPEWMGNMKVLSLLNLDCNSLTGPIPGSLLSNSGLDVANLSRNALEGTIPDVFGSKTYLVSLDLSHNSLSGRIPDSLSSAKFVGHLDISHNKLCGRIPTGFPFDHLEATSFSDNQCLCGGPLTTSC.

Residues 1–26 (MRKLLASPFSSLLAVVFISVISVVRC) form the signal peptide. LRR repeat units lie at residues 136 to 158 (SLRI…IGKL), 160 to 183 (KLAV…TSLI), 184 to 205 (ELKH…DFGS), 208 to 230 (MLSR…ISGM), 232 to 254 (RLAD…MGNM), 256 to 277 (VLSL…SLLS), 280 to 302 (GLDV…FGSK), 304 to 326 (YLVS…LSSA), and 328 to 350 (FVGH…FPFD).

Functionally, this protein is able to complement bacterial recA mutations, but its native function in the plant is not known. The chain is DNA damage-repair/toleration protein DRT100 (DRT100) from Arabidopsis thaliana (Mouse-ear cress).